We begin with the raw amino-acid sequence, 636 residues long: Serine/threonine-protein kinase hal4 (636 aa).

The segment covering 1 to 11 (MGEKDKLHEIS) has biased composition (basic and acidic residues). Disordered stretches follow at residues 1-167 (MGEK…AGVV) and 181-261 (AASP…PSSA). Positions 33-45 (EPPPPSSQQPPST) are enriched in pro residues. 2 stretches are compositionally biased toward polar residues: residues 56 to 92 (ALKQNVRPSLNSVQQTPASIDAVASSSNVSLQSQQPL) and 113 to 124 (NPSRHVSSTSNK). A compositionally biased stretch (low complexity) spans 140 to 155 (PSGSVPPSASVSRANS). Positions 182–226 (ASPNPSTPSNGPAPVSTTATPSRNPVTRLQRIFSQNSVSRQNSRT) are enriched in polar residues. Ser-218 carries the post-translational modification Phosphoserine. Positions 234 to 261 (NTEETNSTGGSETGGAANSSSTSNPSSA) are enriched in low complexity. Residues Thr-238 and Thr-241 each carry the phosphothreonine modification. Ser-299 is subject to Phosphoserine. One can recognise a Protein kinase domain in the interval 351–623 (GRCQEVIGRG…AKQIMKSEWV (273 aa)). Residues 357-365 (IGRGAFGVV) and Lys-385 contribute to the ATP site. Catalysis depends on Asp-481, which acts as the Proton acceptor.

The protein belongs to the protein kinase superfamily. Ser/Thr protein kinase family. Interacts with sty1.

Its subcellular location is the cytoplasm. It carries out the reaction L-seryl-[protein] + ATP = O-phospho-L-seryl-[protein] + ADP + H(+). The enzyme catalyses L-threonyl-[protein] + ATP = O-phospho-L-threonyl-[protein] + ADP + H(+). Promotes K(+) uptake, by the potassium transporter trk1-trk2, which leads to the subsequent cellular resistance to toxic cations such as Na(+), Li(+) and Ca(2+). This Schizosaccharomyces pombe (strain 972 / ATCC 24843) (Fission yeast) protein is Serine/threonine-protein kinase hal4 (hal4).